We begin with the raw amino-acid sequence, 102 residues long: Large ribosomal subunit protein bL28 (102 aa).

Residues 1 to 20 are disordered; the sequence is MSRRCELTAKGPQVGHKVSH.

It belongs to the bacterial ribosomal protein bL28 family.

In Bradyrhizobium sp. (strain ORS 278), this protein is Large ribosomal subunit protein bL28.